The following is a 409-amino-acid chain: MTTDVRVLRQDDWNLWYDTLIRAFGGVAEASEERELWQTLTECDRSIGVWDGDACVGTAGAFSFRVTVPGGASVPAAGITMVSVAATHRRRGVLTAMMRRQLDDIRSWGEPLAVLTASEPAIYGRFGYGIGTHQLTADVDTSRVRLSVPPGTDDVRLRYAVPADVLDVCEAVYARLVPGRPGMPARRPGWDRLMVLDPESRRDGASPLQCVVAERDGETVGYTRFRVKPDWEPSGPKGTVVLQDLEALDPAAHAALWRFLFDIDLTSHLNARNRPLDEAWLHLVSDIRRCNLRKRDSLHVRLVDVGAALEARTYQAPVDVVFEVEDAFCPWNEGRWRLTGDGKGATCVRTRDSVDLALSVRDLGAAYLGGVSLVSLGAAGRVRELRPGALTEATSAFSSAIAPWLPHGF.

The region spanning 3-162 (TDVRVLRQDD…DDVRLRYAVP (160 aa)) is the N-acetyltransferase domain. Acetyl-CoA is bound by residues 82 to 84 (VSV), 90 to 95 (RRGVLT), and 118 to 119 (SE). Catalysis depends on tyrosine 123, which acts as the Proton donor. Residue phenylalanine 409 is the Proton acceptor; via carboxylate of the active site.

The protein belongs to the acetyltransferase Eis family. As to quaternary structure, homohexamer; trimer of dimers.

This is an uncharacterized protein from Streptomyces avermitilis (strain ATCC 31267 / DSM 46492 / JCM 5070 / NBRC 14893 / NCIMB 12804 / NRRL 8165 / MA-4680).